The primary structure comprises 651 residues: Threonine--tRNA ligase (651 aa).

In terms of domain architecture, TGS spans 1 to 61 (MIKITFPDNS…NDDATVKLLK (61 aa)). Positions 242-541 (DHRKIGKEMD…LIEHTAGKFP (300 aa)) are catalytic. The Zn(2+) site is built by cysteine 337, histidine 388, and histidine 518.

This sequence belongs to the class-II aminoacyl-tRNA synthetase family. Homodimer. Zn(2+) serves as cofactor.

Its subcellular location is the cytoplasm. It catalyses the reaction tRNA(Thr) + L-threonine + ATP = L-threonyl-tRNA(Thr) + AMP + diphosphate + H(+). Catalyzes the attachment of threonine to tRNA(Thr) in a two-step reaction: L-threonine is first activated by ATP to form Thr-AMP and then transferred to the acceptor end of tRNA(Thr). Also edits incorrectly charged L-seryl-tRNA(Thr). This is Threonine--tRNA ligase from Parabacteroides distasonis (strain ATCC 8503 / DSM 20701 / CIP 104284 / JCM 5825 / NCTC 11152).